Consider the following 155-residue polypeptide: Phospholipase A2 A2-actitoxin-Ucs2a (155 aa).

An N-terminal signal peptide occupies residues 1–19 (MKNNIILVILLGISVFVDC). Residues 20–42 (LPLNDQEEDKSLNAQESEVSAVQ) constitute a propeptide that is removed on maturation. Intrachain disulfides connect Cys-55–Cys-118, Cys-71–Cys-87, Cys-86–Cys-143, Cys-93–Cys-136, Cys-100–Cys-129, and Cys-122–Cys-134. Gly-72 and Gly-74 together coordinate Ca(2+). His-90 is a catalytic residue. Asp-91 contributes to the Ca(2+) binding site. Residue Asp-137 is part of the active site.

It belongs to the phospholipase A2 family. The cofactor is Ca(2+).

It localises to the secreted. Its subcellular location is the nematocyst. The catalysed reaction is a 1,2-diacyl-sn-glycero-3-phosphocholine + H2O = a 1-acyl-sn-glycero-3-phosphocholine + a fatty acid + H(+). PLA2 catalyzes the calcium-dependent hydrolysis of the 2-acyl groups in 3-sn-phosphoglycerides. In Urticina crassicornis (Mottled anemone), this protein is Phospholipase A2 A2-actitoxin-Ucs2a.